The following is a 278-amino-acid chain: IMMAMKLEKENALEKAINLENQLKEKAKDFEKKEEEMNDWLSKVKNIQTEVDTVQESLQEAISKLEETEKRATNAEAEVAAMTRRIRLLEEDFEQSSGRLTETSTKLDDASKAAEESERNRKTLETRSISDDERMAQLEEQVKEAKYIAEDAERKYDEAARRLAVTEVDLERAESRLETSESKIVELEEELRIVGNNMKSLEVSEQESLQREESYEETIRDLTERLKTAEQRAAEAERQVSKLQNEVDRLEDELLSEKERYRAISGELDTTFAELTSF.

Residues 1 to 270 (IMMAMKLEKE…YRAISGELDT (270 aa)) adopt a coiled-coil conformation. Residues 92 to 134 (DFEQSSGRLTETSTKLDDASKAAEESERNRKTLETRSISDDER) are disordered. Positions 95-104 (QSSGRLTETS) are enriched in polar residues. Over residues 105–134 (TKLDDASKAAEESERNRKTLETRSISDDER) the composition is skewed to basic and acidic residues.

Belongs to the tropomyosin family. In terms of assembly, homodimer.

Its function is as follows. Tropomyosin, in association with the troponin complex, plays a central role in the calcium dependent regulation of muscle contraction. In Echinococcus granulosus (Hydatid tapeworm), this protein is Tropomyosin A.